A 251-amino-acid chain; its full sequence is Insertion sequence IS5376 putative ATP-binding protein (251 aa).

An ATP-binding site is contributed by Gly-105–Thr-112.

It belongs to the IS21/IS1162 putative ATP-binding protein family.

This Geobacillus stearothermophilus (Bacillus stearothermophilus) protein is Insertion sequence IS5376 putative ATP-binding protein.